The following is a 319-amino-acid chain: ATP-dependent 6-phosphofructokinase (319 aa).

G11 is an ATP binding site. 21–25 (RAVVR) contacts ADP. ATP is bound by residues 72 to 73 (RC) and 102 to 105 (GDGS). Residue D103 coordinates Mg(2+). 125-127 (TID) is a binding site for substrate. The active-site Proton acceptor is D127. R154 contacts ADP. Residues R162 and 169–171 (MGR) each bind substrate. ADP contacts are provided by residues 185–187 (GAE), R211, and 213–215 (KKH). Residues E222, R243, and 249–252 (HVQR) each bind substrate.

The protein belongs to the phosphofructokinase type A (PFKA) family. ATP-dependent PFK group I subfamily. Prokaryotic clade 'B1' sub-subfamily. Homotetramer. Mg(2+) is required as a cofactor.

It is found in the cytoplasm. It carries out the reaction beta-D-fructose 6-phosphate + ATP = beta-D-fructose 1,6-bisphosphate + ADP + H(+). Its pathway is carbohydrate degradation; glycolysis; D-glyceraldehyde 3-phosphate and glycerone phosphate from D-glucose: step 3/4. Its activity is regulated as follows. Allosterically activated by ADP and other diphosphonucleosides, and allosterically inhibited by phosphoenolpyruvate. Catalyzes the phosphorylation of D-fructose 6-phosphate to fructose 1,6-bisphosphate by ATP, the first committing step of glycolysis. The protein is ATP-dependent 6-phosphofructokinase of Bacillus mycoides (strain KBAB4) (Bacillus weihenstephanensis).